The primary structure comprises 266 residues: Tryptophan synthase alpha chain (266 aa).

Active-site proton acceptor residues include glutamate 49 and aspartate 60.

It belongs to the TrpA family. Tetramer of two alpha and two beta chains.

It catalyses the reaction (1S,2R)-1-C-(indol-3-yl)glycerol 3-phosphate + L-serine = D-glyceraldehyde 3-phosphate + L-tryptophan + H2O. It functions in the pathway amino-acid biosynthesis; L-tryptophan biosynthesis; L-tryptophan from chorismate: step 5/5. In terms of biological role, the alpha subunit is responsible for the aldol cleavage of indoleglycerol phosphate to indole and glyceraldehyde 3-phosphate. The polypeptide is Tryptophan synthase alpha chain (Shewanella amazonensis (strain ATCC BAA-1098 / SB2B)).